A 267-amino-acid chain; its full sequence is tRNA pseudouridine synthase A (267 aa).

Catalysis depends on Asp-53, which acts as the Nucleophile. Residue Tyr-114 coordinates substrate.

The protein belongs to the tRNA pseudouridine synthase TruA family. Homodimer.

The enzyme catalyses uridine(38/39/40) in tRNA = pseudouridine(38/39/40) in tRNA. Its function is as follows. Formation of pseudouridine at positions 38, 39 and 40 in the anticodon stem and loop of transfer RNAs. The polypeptide is tRNA pseudouridine synthase A (Chlamydia muridarum (strain MoPn / Nigg)).